The chain runs to 795 residues: uncharacterized protein (795 aa).

Positions 228-280 (NIICFKNKCKNNEKEKKEEEEDHDHDHDDKKKEKEDKEKEEEEEEEDSNDDFE) form a coiled coil. 4 disordered regions span residues 242 to 278 (EKKEEEEDHDHDHDDKKKEKEDKEKEEEEEEEDSNDD), 326 to 430 (TTTT…TPNR), 455 to 484 (INQQQQQQQQQQSSTSPSISPSSSNIKSEP), and 673 to 743 (NNNN…NENE). Positions 251–264 (DHDHDDKKKEKEDK) are enriched in basic and acidic residues. Over residues 265–278 (EKEEEEEEEDSNDD) the composition is skewed to acidic residues. A compositionally biased stretch (low complexity) spans 326–345 (TTTTTVNGSKNSSNTTTPIT). Residues 362–373 (DDDDDDDLTDED) show a composition bias toward acidic residues. The segment covering 377 to 398 (HNEIYSTSPKVSHSTFCQSSPT) has biased composition (polar residues). 3 stretches are compositionally biased toward low complexity: residues 399-414 (LLDLDLQQQQQQQQQQ), 455-480 (INQQQQQQQQQQSSTSPSISPSSSNI), and 673-729 (NNNN…NQNE). The span at 732-743 (NENKNENENENE) shows a compositional bias: basic and acidic residues.

This is an uncharacterized protein from Dictyostelium discoideum (Social amoeba).